A 290-amino-acid polypeptide reads, in one-letter code: 4-hydroxy-tetrahydrodipicolinate synthase (290 aa).

Thr48 contacts pyruvate. Tyr137 (proton donor/acceptor) is an active-site residue. Lys165 acts as the Schiff-base intermediate with substrate in catalysis. Ile206 contacts pyruvate.

This sequence belongs to the DapA family. In terms of assembly, homotetramer; dimer of dimers.

It localises to the cytoplasm. It catalyses the reaction L-aspartate 4-semialdehyde + pyruvate = (2S,4S)-4-hydroxy-2,3,4,5-tetrahydrodipicolinate + H2O + H(+). The protein operates within amino-acid biosynthesis; L-lysine biosynthesis via DAP pathway; (S)-tetrahydrodipicolinate from L-aspartate: step 3/4. Catalyzes the condensation of (S)-aspartate-beta-semialdehyde [(S)-ASA] and pyruvate to 4-hydroxy-tetrahydrodipicolinate (HTPA). The chain is 4-hydroxy-tetrahydrodipicolinate synthase from Enterococcus faecalis (strain ATCC 700802 / V583).